We begin with the raw amino-acid sequence, 165 residues long: Immunity protein YokJ (165 aa).

Probably interacts with cognate toxin YokI but not with other non-cognate toxins. The interaction inhibits the toxic activity of YokI.

The protein resides in the cytoplasm. Functionally, immunity component of one of 6 LXG toxin-immunity modules in this strain. They promote kin selection, mediate competition in biofilms, and drive spatial segregation of different strains, indicating that LXG toxins may help avoid warfare between strains in biofilms. Mediates intercellular competition during biofilm formation; disruption of the operon disadvantages the bacteria, but overexpression of the cognate immunity protein restores growth in competition with wild-type. In situ neutralizes the toxic effect of cognate toxin YokI. Neutralizes the ability to inhibit growth of cognate toxin YokI upon expression in E.coli. Does not have immunity protein activity on other LXG toxins. This chain is Immunity protein YokJ (yokJ), found in Bacillus subtilis (strain 168).